We begin with the raw amino-acid sequence, 1547 residues long: ABC multidrug transporter atrF (1547 aa).

Disordered stretches follow at residues 1–66 (MADG…RRGA) and 85–123 (TRSVGKDAHRLRSRASGRASQVHDEEKAIDEEDSTIDGD). Residues 10–19 (SATSTTMETN) show a composition bias toward polar residues. Over residues 36-47 (SSSMTATSSELS) the composition is skewed to low complexity. Basic and acidic residues predominate over residues 51 to 66 (RWGERDQGEPVSRRGA). Residues 111–123 (KAIDEEDSTIDGD) are compositionally biased toward acidic residues. An ABC transporter 1 domain is found at 197–439 (IPQLRFGKQP…FVNLGFHCPE (243 aa)). N-linked (GlcNAc...) asparagine glycosylation is found at Asn299 and Asn363. The next 7 membrane-spanning stretches (helical) occupy residues 552–572 (LYTKYFIIISNALIVSSLFYG), 586–606 (ALFFSILFLGWLQLTELMPAV), 635–655 (FPAIFCMVVPFTIIMYFMTGL), 657–677 (VTASKFFIYFLFVYTTTFSIT), 698–718 (GIALNILVIFVGYVIPKQGLI), 722–742 (IWFGWLFYVNPIAYSYEAVLT), and 804–824 (FGVVIAFTVLYLIVTVLAAEF). An ABC transporter 2 domain is found at 892–1130 (FTWSNVEYTV…DVIKYFADRG (239 aa)). Residue Asn905 is glycosylated (N-linked (GlcNAc...) asparagine). Residue 928 to 935 (GASGAGKT) participates in ATP binding. N-linked (GlcNAc...) asparagine glycans are attached at residues Asn980 and Asn999. A run of 8 helical transmembrane segments spans residues 1230–1250 (FVSVIIGIFNGFTFWMLGNSI), 1260–1280 (IFLIIMIPPVVLNSIVPKFYI), 1309–1329 (IPMAIVSSLIYWLLWYYPVGF), 1334–1354 (STAGYVFLMSMLFFLFMSSWG), 1356–1376 (WICAFAPSFTVISNVLPFFFV), 1397–1417 (YWMYYVNPVTWWLRGVISSIF), 1491–1511 (CFGIFLAFVIINWLLVYFFIY), and 1520–1540 (FGMGYLFGGMGLVIDKVKGVF).

Belongs to the ABC transporter superfamily. ABCG family. PDR (TC 3.A.1.205) subfamily.

The protein resides in the cell membrane. It carries out the reaction voriconazole(in) + ATP + H2O = voriconazole(out) + ADP + phosphate + H(+). The enzyme catalyses fluconazole(in) + ATP + H2O = fluconazole(out) + ADP + phosphate + H(+). In terms of biological role, pleiotropic ABC efflux transporter involved in the basal level of azole susceptibility. Confers resistance to fluconazole and voriconazole. This is ABC multidrug transporter atrF from Aspergillus fumigatus (strain ATCC MYA-4609 / CBS 101355 / FGSC A1100 / Af293) (Neosartorya fumigata).